A 312-amino-acid polypeptide reads, in one-letter code: Beta-ketoacyl-[acyl-carrier-protein] synthase III 1 (312 aa).

Active-site residues include Cys-113 and His-237. Positions 238 to 242 (QANIR) are ACP-binding. Asn-267 is a catalytic residue.

This sequence belongs to the thiolase-like superfamily. FabH family. As to quaternary structure, homodimer.

Its subcellular location is the cytoplasm. It catalyses the reaction malonyl-[ACP] + acetyl-CoA + H(+) = 3-oxobutanoyl-[ACP] + CO2 + CoA. Its pathway is lipid metabolism; fatty acid biosynthesis. Its function is as follows. Catalyzes the condensation reaction of fatty acid synthesis by the addition to an acyl acceptor of two carbons from malonyl-ACP. Catalyzes the first condensation reaction which initiates fatty acid synthesis and may therefore play a role in governing the total rate of fatty acid production. Possesses both acetoacetyl-ACP synthase and acetyl transacylase activities. Its substrate specificity determines the biosynthesis of branched-chain and/or straight-chain of fatty acids. This is Beta-ketoacyl-[acyl-carrier-protein] synthase III 1 from Halalkalibacterium halodurans (strain ATCC BAA-125 / DSM 18197 / FERM 7344 / JCM 9153 / C-125) (Bacillus halodurans).